The following is a 216-amino-acid chain: ATP-dependent Clp protease proteolytic subunit (216 aa).

Residue S103 is the Nucleophile of the active site. H128 is an active-site residue. The segment at 197–216 is disordered; it reads RRPALPGDDAPRDVSEGPTP.

It belongs to the peptidase S14 family. Fourteen ClpP subunits assemble into 2 heptameric rings which stack back to back to give a disk-like structure with a central cavity, resembling the structure of eukaryotic proteasomes.

The protein resides in the cytoplasm. The catalysed reaction is Hydrolysis of proteins to small peptides in the presence of ATP and magnesium. alpha-casein is the usual test substrate. In the absence of ATP, only oligopeptides shorter than five residues are hydrolyzed (such as succinyl-Leu-Tyr-|-NHMec, and Leu-Tyr-Leu-|-Tyr-Trp, in which cleavage of the -Tyr-|-Leu- and -Tyr-|-Trp bonds also occurs).. Its function is as follows. Cleaves peptides in various proteins in a process that requires ATP hydrolysis. Has a chymotrypsin-like activity. Plays a major role in the degradation of misfolded proteins. This Sphingopyxis alaskensis (strain DSM 13593 / LMG 18877 / RB2256) (Sphingomonas alaskensis) protein is ATP-dependent Clp protease proteolytic subunit.